Consider the following 402-residue polypeptide: Galactoside 2-alpha-L-fucosyltransferase (402 aa).

Residues 1–6 (MRYNSN) lie on the Cytoplasmic side of the membrane. Residues 7–27 (YLMYFCLVLGIFANIYVIIKI) form a helical; Signal-anchor for type II membrane protein membrane-spanning segment. Residues 28-402 (TLGSSHILEY…TDLNGKISKY (375 aa)) are Lumenal-facing. N119, N175, and N301 each carry an N-linked (GlcNAc...) asparagine glycan.

Belongs to the glycosyltransferase 11 family. As to quaternary structure, may form oligomers. Post-translationally, N-glycosylated. As to expression, expression is restricted to pharyngeal neurons and gland cells.

The protein resides in the golgi apparatus. Its subcellular location is the golgi stack membrane. It participates in protein modification; protein glycosylation. In terms of biological role, selectively catalyzes the addition of fucose in alpha 1-2 linkage to Gal-beta-(1-&gt;3)-GalNAc-alpha-R, Gal-beta-(1-&gt;3)-(GlcNAc-beta-(1-&gt;6))-GalNAc-alpha-R and Gal-beta-(1-&gt;3)-GalNAc acceptors but not Gal-beta-(1-&gt;3)-GlcNAc-beta-(1-&gt;3)-Gal-beta-(1-&gt;4)-Glc in vitro. This is Galactoside 2-alpha-L-fucosyltransferase from Caenorhabditis elegans.